Here is a 254-residue protein sequence, read N- to C-terminus: Putative epimerase LsrE (254 aa).

The chain crosses the membrane as a helical span at residues 14–34 (VALLASYPLSVGILAGQWIAL). Residues histidine 50, aspartate 52, and histidine 81 each coordinate a divalent metal cation. Aspartate 52 (proton acceptor) is an active-site residue. Residues histidine 81, 166 to 169 (GYGS), 199 to 201 (DGS), and 221 to 222 (GS) contribute to the substrate site. A divalent metal cation is bound at residue aspartate 199. The active-site Proton donor is the aspartate 199.

Belongs to the ribulose-phosphate 3-epimerase family. The cofactor is a divalent metal cation.

Its subcellular location is the cell membrane. The polypeptide is Putative epimerase LsrE (lsrE) (Salmonella paratyphi A (strain ATCC 9150 / SARB42)).